A 351-amino-acid polypeptide reads, in one-letter code: DNA integrity scanning protein DisA (351 aa).

Residues 4–142 (RSGFWQVLQQ…GPMKYILRDF (139 aa)) enclose the DAC domain. ATP contacts are provided by residues Gly-71, Leu-89, and 102–106 (TRHRT).

This sequence belongs to the DisA family. Homooctamer. The cofactor is Mg(2+).

It carries out the reaction 2 ATP = 3',3'-c-di-AMP + 2 diphosphate. Its function is as follows. Participates in a DNA-damage check-point that is active prior to asymmetric division when DNA is damaged. DisA forms globular foci that rapidly scan along the chromosomes during sporulation, searching for lesions. When a lesion is present, DisA pauses at the lesion site. This triggers a cellular response that culminates in a temporary block in sporulation initiation. In terms of biological role, also has diadenylate cyclase activity, catalyzing the condensation of 2 ATP molecules into cyclic di-AMP (c-di-AMP). c-di-AMP acts as a signaling molecule that couples DNA integrity with progression of sporulation. The rise in c-di-AMP level generated by DisA while scanning the chromosome, operates as a positive signal that advances sporulation; upon encountering a lesion, the DisA focus arrests at the damaged site and halts c-di-AMP synthesis. The polypeptide is DNA integrity scanning protein DisA (Symbiobacterium thermophilum (strain DSM 24528 / JCM 14929 / IAM 14863 / T)).